The chain runs to 343 residues: UBP1-associated proteins 1A (343 aa).

The segment at 1 to 61 is disordered; the sequence is MAKTLDKSKK…SESDNEFDPE (61 aa). Residues 28-49 are compositionally biased toward low complexity; the sequence is NKQQQQPESSTPYSSSSSSSDS. Residues 50–61 show a composition bias toward acidic residues; sequence SDSESDNEFDPE. The RRM domain occupies 104 to 181; that stretch reads RKIFVYGLPW…RTATCQLASM (78 aa). The segment at 312-343 is disordered; sequence STYPDSDAGGKRGTGKDSDAGGSSFHGYSNYS. The segment covering 319–330 has biased composition (basic and acidic residues); that stretch reads AGGKRGTGKDSD.

As to quaternary structure, interacts with UBA1A, UBA2A, UBP1A, UBP1B and UBP1C.

It is found in the nucleus. Acts as a component of a complex regulating the turnover of mRNAs in the nucleus. Binds with high affinity to RNA molecules that contain U-rich sequences in 3'-UTRs. May function in complex with UBP1 and contribute to the stabilization of mRNAs in the nucleus. However, unlike UBP1, UBA1A does not stimulate pre-mRNA splicing. The sequence is that of UBP1-associated proteins 1A (UBA1A) from Arabidopsis thaliana (Mouse-ear cress).